Reading from the N-terminus, the 839-residue chain is Taste receptor type 1 member 2 (839 aa).

Positions 1–19 (MRPRATTICSLFFLLRVLA) are cleaved as a signal peptide. Over 20 to 566 (EPAKNSDFYL…AFLEWHEAPT (547 aa)) the chain is Extracellular. 9 N-linked (GlcNAc...) asparagine glycosylation sites follow: asparagine 84, asparagine 127, asparagine 248, asparagine 292, asparagine 312, asparagine 368, asparagine 428, asparagine 487, and asparagine 527. A helical membrane pass occupies residues 567-587 (IVVALLAALGFLSTLAILVIF). Residues 588–602 (WRHFQTPMVRSAGGP) lie on the Cytoplasmic side of the membrane. The helical transmembrane segment at 603–623 (MCFLMLTLLLVAYMVVPVYVG) threads the bilayer. Residues 624-635 (PPKVSTCFCRQA) lie on the Extracellular side of the membrane. The helical transmembrane segment at 636-656 (LFPLCFTICISCIAVRSFQIV) threads the bilayer. The Cytoplasmic segment spans residues 657 to 681 (CVFKMASRFPRAYSYWVRYQGPYVS). Residues 682-702 (MAFITVLKMVTVVIGMLATGL) form a helical membrane-spanning segment. Residues 703 to 727 (NPTTRIDPDDPKIMIVSCNPNYRNS) lie on the Extracellular side of the membrane. Residues 728–748 (LFFNTGLDLLLSVVGFSFAYM) traverse the membrane as a helical segment. Residues 749 to 760 (GKELPTNYNEAK) are Cytoplasmic-facing. The chain crosses the membrane as a helical span at residues 761–781 (FITLSMTFYFTSSVSLCTFMS). Topologically, residues 782–784 (AYN) are extracellular. A helical membrane pass occupies residues 785–805 (GVLVTIMDLLVTVLNLLAISL). Residues 806–839 (GYFGPKCYMILFYPERNTPAYFNSMIQGYTMRRD) lie on the Cytoplasmic side of the membrane.

It belongs to the G-protein coupled receptor 3 family. TAS1R subfamily. As to quaternary structure, forms heterodimers with TAS1R3.

The protein resides in the cell membrane. In terms of biological role, putative taste receptor. TAS1R2/TAS1R3 recognizes diverse natural and synthetic sweeteners. In Papio hamadryas (Hamadryas baboon), this protein is Taste receptor type 1 member 2 (TAS1R2).